We begin with the raw amino-acid sequence, 104 residues long: UPF0145 protein TM1040_1243 (104 aa).

Belongs to the UPF0145 family.

The polypeptide is UPF0145 protein TM1040_1243 (Ruegeria sp. (strain TM1040) (Silicibacter sp.)).